Consider the following 555-residue polypeptide: Dihydroxy-acid dehydratase (555 aa).

Cys-46 is a [2Fe-2S] cluster binding site. Asp-78 provides a ligand contact to Mg(2+). Cys-119 provides a ligand contact to [2Fe-2S] cluster. The Mg(2+) site is built by Asp-120 and Lys-121. Lys-121 bears the N6-carboxylysine mark. [2Fe-2S] cluster is bound at residue Cys-191. Glu-442 is a binding site for Mg(2+). Residue Ser-468 is the Proton acceptor of the active site.

It belongs to the IlvD/Edd family. In terms of assembly, homodimer. It depends on [2Fe-2S] cluster as a cofactor. The cofactor is Mg(2+).

It carries out the reaction (2R)-2,3-dihydroxy-3-methylbutanoate = 3-methyl-2-oxobutanoate + H2O. The catalysed reaction is (2R,3R)-2,3-dihydroxy-3-methylpentanoate = (S)-3-methyl-2-oxopentanoate + H2O. The protein operates within amino-acid biosynthesis; L-isoleucine biosynthesis; L-isoleucine from 2-oxobutanoate: step 3/4. It functions in the pathway amino-acid biosynthesis; L-valine biosynthesis; L-valine from pyruvate: step 3/4. Functionally, functions in the biosynthesis of branched-chain amino acids. Catalyzes the dehydration of (2R,3R)-2,3-dihydroxy-3-methylpentanoate (2,3-dihydroxy-3-methylvalerate) into 2-oxo-3-methylpentanoate (2-oxo-3-methylvalerate) and of (2R)-2,3-dihydroxy-3-methylbutanoate (2,3-dihydroxyisovalerate) into 2-oxo-3-methylbutanoate (2-oxoisovalerate), the penultimate precursor to L-isoleucine and L-valine, respectively. The polypeptide is Dihydroxy-acid dehydratase (Thermus thermophilus (strain ATCC BAA-163 / DSM 7039 / HB27)).